Here is a 158-residue protein sequence, read N- to C-terminus: Peroxidase (158 aa).

Position 2 (proline 2) interacts with substrate. A heme b-binding site is contributed by histidine 32. Threonine 33 serves as a coordination point for Ca(2+). Cysteine 39 and cysteine 64 are oxidised to a cystine. An N-linked (GlcNAc...) asparagine glycan is attached at asparagine 48. Residues aspartate 78, threonine 81, and aspartate 86 each coordinate Ca(2+).

The protein belongs to the peroxidase family. Classical plant (class III) peroxidase subfamily. Requires Ca(2+) as cofactor. Heme b serves as cofactor.

It catalyses the reaction 2 a phenolic donor + H2O2 = 2 a phenolic radical donor + 2 H2O. Functionally, removal of H(2)O(2), oxidation of toxic reductants, biosynthesis and degradation of lignin, suberization, auxin catabolism, response to environmental stresses such as wounding, pathogen attack and oxidative stress. These functions might be dependent on each isozyme/isoform in each plant tissue. In Lupinus polyphyllus (Large-leaved lupine), this protein is Peroxidase.